The chain runs to 297 residues: Cbb3-type cytochrome c oxidase subunit CcoP (297 aa).

The Cytoplasmic portion of the chain corresponds to 1–35; sequence MSKKPTTKKEVQTTGHSWDGIEELNTPLPRWWLWT. A helical membrane pass occupies residues 36–56; sequence FYATIVWGVAYSIAMPAWPIF. Topologically, residues 57-297 are periplasmic; that stretch reads ASGATPGILG…SYVHSLGGGQ (241 aa). Cytochrome c domains are found at residues 108 to 199 and 206 to 294; these read YTRN…LKIS and ARAT…HSLG. 8 residues coordinate heme c: Cys121, Cys124, His125, Met174, Cys219, Cys222, His223, and Met264.

The protein belongs to the CcoP / FixP family. Component of the cbb3-type cytochrome c oxidase at least composed of CcoN, CcoO, CcoQ and CcoP. Interacts with CcoH (via transmembrane domain). The cofactor is heme c.

The protein localises to the cell inner membrane. It functions in the pathway energy metabolism; oxidative phosphorylation. In terms of biological role, C-type cytochrome. Part of the cbb3-type cytochrome c oxidase complex. CcoP subunit is required for transferring electrons from donor cytochrome c via its heme groups to CcoO subunit. From there, electrons are shuttled to the catalytic binuclear center of CcoN subunit where oxygen reduction takes place. The complex also functions as a proton pump. The protein is Cbb3-type cytochrome c oxidase subunit CcoP of Rhodobacter capsulatus (strain ATCC BAA-309 / NBRC 16581 / SB1003).